The sequence spans 324 residues: Arginase (324 aa).

4 residues coordinate Mn(2+): histidine 115, aspartate 143, histidine 145, and aspartate 147. Substrate is bound by residues 145 to 149 (HADIN), 156 to 158 (SGN), and aspartate 202. 2 residues coordinate Mn(2+): aspartate 249 and aspartate 251. Substrate is bound by residues threonine 263 and glutamate 294.

This sequence belongs to the arginase family. In terms of assembly, homotrimer. The cofactor is Mn(2+).

The enzyme catalyses L-arginine + H2O = urea + L-ornithine. The protein operates within nitrogen metabolism; urea cycle; L-ornithine and urea from L-arginine: step 1/1. This Emericella nidulans (strain FGSC A4 / ATCC 38163 / CBS 112.46 / NRRL 194 / M139) (Aspergillus nidulans) protein is Arginase (agaA).